Reading from the N-terminus, the 233-residue chain is NADP-dependent glyceraldehyde-3-phosphate dehydrogenase (233 aa).

7 to 8 (NY) lines the substrate pocket. 2 residues coordinate NADP(+): Lys30 and Ser33. Residue 83 to 87 (GGDTG) coordinates NAD(+). The active-site Proton acceptor is the Glu102. 135 to 137 (RCT) contacts substrate. Cys136 functions as the Nucleophile in the catalytic mechanism. Glu180 and Glu229 together coordinate NADP(+).

It belongs to the aldehyde dehydrogenase family.

It is found in the cytoplasm. It carries out the reaction D-glyceraldehyde 3-phosphate + NADP(+) + H2O = (2R)-3-phosphoglycerate + NADPH + 2 H(+). Important as a means of generating NADPH for biosynthetic reactions. This is NADP-dependent glyceraldehyde-3-phosphate dehydrogenase (GapN) from Scenedesmus vacuolatus (Green alga).